Here is a 303-residue protein sequence, read N- to C-terminus: Probable 5-dehydro-4-deoxyglucarate dehydratase (303 aa).

This sequence belongs to the DapA family.

The catalysed reaction is 5-dehydro-4-deoxy-D-glucarate + H(+) = 2,5-dioxopentanoate + CO2 + H2O. It functions in the pathway carbohydrate acid metabolism; D-glucarate degradation; 2,5-dioxopentanoate from D-glucarate: step 2/2. The chain is Probable 5-dehydro-4-deoxyglucarate dehydratase from Pseudomonas putida (strain GB-1).